The sequence spans 91 residues: Probable Fe(2+)-trafficking protein (91 aa).

It belongs to the Fe(2+)-trafficking protein family. Monomer.

In terms of biological role, could be a mediator in iron transactions between iron acquisition and iron-requiring processes, such as synthesis and/or repair of Fe-S clusters in biosynthetic enzymes. The protein is Probable Fe(2+)-trafficking protein of Escherichia coli O7:K1 (strain IAI39 / ExPEC).